Reading from the N-terminus, the 546-residue chain is Probable protein kinase UbiB (546 aa).

Residues 123 to 501 (DFQEIPLASA…RTNHGQALFL (379 aa)) enclose the Protein kinase domain. ATP is bound by residues 129–137 (LASASISQV) and K152. Catalysis depends on D287, which acts as the Proton acceptor. The next 2 membrane-spanning stretches (helical) occupy residues 497–517 (QALF…FLYI) and 521–541 (YLKI…TIGW).

Belongs to the ABC1 family. UbiB subfamily.

It is found in the cell inner membrane. The protein operates within cofactor biosynthesis; ubiquinone biosynthesis [regulation]. Is probably a protein kinase regulator of UbiI activity which is involved in aerobic coenzyme Q (ubiquinone) biosynthesis. This Blochmanniella pennsylvanica (strain BPEN) protein is Probable protein kinase UbiB.